The chain runs to 274 residues: Pyrogallol hydroxytransferase small subunit (274 aa).

The [4Fe-4S] cluster site is built by cysteine 13, cysteine 16, cysteine 19, cysteine 23, cysteine 68, cysteine 71, cysteine 76, cysteine 109, cysteine 126, cysteine 129, cysteine 145, and cysteine 149.

In terms of assembly, heterodimer of a large and a small subunit. The cofactor is [4Fe-4S] cluster.

It carries out the reaction 1,2,3,5-tetrahydroxybenzene + 1,2,3-trihydroxybenzene = 1,2,3,5-tetrahydroxybenzene + 1,3,5-trihydroxybenzene. Its function is as follows. Isomerization of pyrogallol to phloroglucin. This Pelobacter acidigallici protein is Pyrogallol hydroxytransferase small subunit (bthL).